Consider the following 90-residue polypeptide: Large ribosomal subunit protein bL27 (90 aa).

Residues 1 to 21 are disordered; that stretch reads MASKKAGGSTRNGRDSEAKRL.

It belongs to the bacterial ribosomal protein bL27 family.

This chain is Large ribosomal subunit protein bL27, found in Neisseria gonorrhoeae (strain ATCC 700825 / FA 1090).